The following is a 356-amino-acid chain: MPIKDYYQILGVSKDATAEEIKKAYRRLAKEYHPDISADENASEKFKEINEAYHILSDEERRKEYDRILKSGDEKSYRDFMEYIQDFLESIWQGMRRSPKPKKGGDVRLKLELTLEEAAFGCEKDIEYERWIDCPTCEGKGYVGKMEKVTCHACEGTGRRVSGIFSFPRPCSVCKGRGFIIKNQCPACSGRGRVAMHSLLRVNVPPGTDEGDVLKVPGKGHTGERGGEAGDLYLRVSLKPHPIFKKVGKDLYMEAFISFPLAVLGGTTKIKTLEGSYQEVFLQPGTECGSTKRLQGLGYPIAGGRGDLIITFRIEVPKNVNSNIRALIEKLAKELGEEGIEYQSGVITKILSLLKL.

The J domain maps to 5–69 (DYYQILGVSK…ERRKEYDRIL (65 aa)). The CR-type zinc-finger motif lies at 121–197 (GCEKDIEYER…CSGRGRVAMH (77 aa)). Zn(2+)-binding residues include C134, C137, C151, C154, C171, C174, C185, and C188. CXXCXGXG motif repeat units follow at residues 134–141 (CPTCEGKG), 151–158 (CHACEGTG), 171–178 (CSVCKGRG), and 185–192 (CPACSGRG).

It belongs to the DnaJ family. In terms of assembly, homodimer. Requires Zn(2+) as cofactor.

The protein resides in the cytoplasm. Functionally, participates actively in the response to hyperosmotic and heat shock by preventing the aggregation of stress-denatured proteins and by disaggregating proteins, also in an autonomous, DnaK-independent fashion. Unfolded proteins bind initially to DnaJ; upon interaction with the DnaJ-bound protein, DnaK hydrolyzes its bound ATP, resulting in the formation of a stable complex. GrpE releases ADP from DnaK; ATP binding to DnaK triggers the release of the substrate protein, thus completing the reaction cycle. Several rounds of ATP-dependent interactions between DnaJ, DnaK and GrpE are required for fully efficient folding. Also involved, together with DnaK and GrpE, in the DNA replication of plasmids through activation of initiation proteins. In Hydrogenobacter thermophilus (strain DSM 6534 / IAM 12695 / TK-6), this protein is Chaperone protein DnaJ.